The following is a 477-amino-acid chain: ATP synthase subunit beta (477 aa).

163-170 is an ATP binding site; the sequence is GGAGVGKT.

The protein belongs to the ATPase alpha/beta chains family. F-type ATPases have 2 components, CF(1) - the catalytic core - and CF(0) - the membrane proton channel. CF(1) has five subunits: alpha(3), beta(3), gamma(1), delta(1), epsilon(1). CF(0) has four main subunits: a(1), b(1), b'(1) and c(9-12).

The protein localises to the cellular thylakoid membrane. The catalysed reaction is ATP + H2O + 4 H(+)(in) = ADP + phosphate + 5 H(+)(out). Its function is as follows. Produces ATP from ADP in the presence of a proton gradient across the membrane. The catalytic sites are hosted primarily by the beta subunits. This Synechococcus sp. (strain JA-2-3B'a(2-13)) (Cyanobacteria bacterium Yellowstone B-Prime) protein is ATP synthase subunit beta.